Here is a 205-residue protein sequence, read N- to C-terminus: Cytochrome c biogenesis ATP-binding export protein CcmA 2 (205 aa).

In terms of domain architecture, ABC transporter spans 2–205 (LEARDLYCER…LALTGGGAGL (204 aa)). Residue 34–41 (GGNGAGKT) participates in ATP binding.

The protein belongs to the ABC transporter superfamily. CcmA exporter (TC 3.A.1.107) family. The complex is composed of two ATP-binding proteins (CcmA) and two transmembrane proteins (CcmB).

It is found in the cell inner membrane. The catalysed reaction is heme b(in) + ATP + H2O = heme b(out) + ADP + phosphate + H(+). Functionally, part of the ABC transporter complex CcmAB involved in the biogenesis of c-type cytochromes; once thought to export heme, this seems not to be the case, but its exact role is uncertain. Responsible for energy coupling to the transport system. The polypeptide is Cytochrome c biogenesis ATP-binding export protein CcmA 2 (Salmonella typhimurium (strain LT2 / SGSC1412 / ATCC 700720)).